The sequence spans 276 residues: Short-chain dehydrogenase anuF (276 aa).

NADP(+) contacts are provided by I18, D68, K130, Y176, K180, V209, and T211. Y176 functions as the Proton acceptor in the catalytic mechanism. The Proton donor role is filled by Y176. K180 serves as the catalytic Lowers pKa of active site Tyr.

This sequence belongs to the short-chain dehydrogenases/reductases (SDR) family.

The catalysed reaction is (2R,9S)-annullatin H + A = (2R)-annullatin F + AH2. Cytochrome P450 monooxygenase; part of the gene cluster that mediates the biosynthesis of annullatin D, an alkylated aromatic polyketide with a fused dihydrobenzofuran lactone ring system that exhibits potent agonistic activities toward the cannabinoid receptors. Within the pathway, anuF is involved in the formation of (2R)-annullatin F from the diastereomer of (2S,9S)-annullatin H (compound 12). The annullatin backbone 2-hydroxymethyl-3-pentylphenol is assembled from one acetyl-CoA starter unit and 5 malonyl-CoA elongation units by cooperation of the highly reducing polyketide synthase anuA, the short-chain dehydrogenase anuB and the oxidoreductase anuC, before being hydroxylated at the C-5 alkyl chain by the cytochrome P450 monooxygenase anuE to form (8S)-annullatin E. The prenyltransferase anuH subsequently installs one isoprenyl group at the benzene ring to form (8S)-annullatin J. Enzymatic or nonenzymatic dihydro-benzofuran ring formation between the prenyl and the phenolic hydroxyl groups in (8S)-annullatin J results in two diastereomers (2S,9S)-annullatin H and compound 12. The intermediate (2S,9S)-annullatin H is then converted to (2S,9S)-annullatin D by the FAD-linked oxidoreductase anuG-catalyzed five-member lactone ring formation. The isomer 12 acts as a substrate for the short-chain dehydrogenase anuF and is oxidized to (2R)-annullatin F, which is subsequently acetylated by an acetyltransferase leading to (2R)-annullatin G formation. The remaining enzymes identified within the cluster, anuD, anuI and anuJ, seem not to be involved in annullatin biosynthesis. The polypeptide is Short-chain dehydrogenase anuF (Penicillium roqueforti (strain FM164)).